Here is an 88-residue protein sequence, read N- to C-terminus: Alpha-latrotoxin associated low molecular weight protein 2 (88 aa).

Residues 1 to 19 (MLKLICIAFLVTVLTLVAG) form the signal peptide. Intrachain disulfides connect Cys-30/Cys-66, Cys-46/Cys-62, and Cys-49/Cys-75.

Belongs to the arthropod CHH/MIH/GIH/VIH hormone family. Expressed by the venom gland.

Its subcellular location is the secreted. May increase the toxicity of alpha-latrotoxin and/or other venom components. Is non-toxic to mice and to the cockroach Periplaneta americana. This is Alpha-latrotoxin associated low molecular weight protein 2 from Latrodectus hesperus (Western black widow spider).